The following is a 208-amino-acid chain: Ribosomal RNA large subunit methyltransferase E (208 aa).

Positions 63, 65, 83, 99, and 124 each coordinate S-adenosyl-L-methionine. Lys-164 acts as the Proton acceptor in catalysis.

Belongs to the class I-like SAM-binding methyltransferase superfamily. RNA methyltransferase RlmE family.

It is found in the cytoplasm. It carries out the reaction uridine(2552) in 23S rRNA + S-adenosyl-L-methionine = 2'-O-methyluridine(2552) in 23S rRNA + S-adenosyl-L-homocysteine + H(+). Specifically methylates the uridine in position 2552 of 23S rRNA at the 2'-O position of the ribose in the fully assembled 50S ribosomal subunit. In Salmonella agona (strain SL483), this protein is Ribosomal RNA large subunit methyltransferase E.